Consider the following 459-residue polypeptide: Zinc finger protein ZFP2 (459 aa).

13 consecutive C2H2-type zinc fingers follow at residues 100 to 122 (YGCD…QRIH), 128 to 150 (YTCN…QRTH), 156 to 178 (YKCH…QRTH), 184 to 206 (YQCK…ERIH), 212 to 234 (YKCH…QRTH), 240 to 262 (YECN…QRSH), 268 to 290 (YECS…QRNH), 296 to 318 (YKCN…QRLH), 324 to 346 (FECN…RRIH), 352 to 374 (YECM…QVIH), 380 to 402 (YECT…QRIH), 408 to 430 (YECD…QRIH), and 436 to 458 (YQCN…QRTH).

Belongs to the krueppel C2H2-type zinc-finger protein family.

The protein localises to the nucleus. Its function is as follows. Probable transcription factor involved in neuronal differentiation and/or phenotypic maintenance. This Mus musculus (Mouse) protein is Zinc finger protein ZFP2 (Zfp2).